The following is a 376-amino-acid chain: Peroxisomal membrane protein PEX27 (376 aa).

As to quaternary structure, homooligomer. Interacts with PEX25 and PEX34.

It is found in the peroxisome membrane. Its function is as follows. Required for regulation of peroxisome size and number. Also promotes peroxisome division and biogenesis. The protein is Peroxisomal membrane protein PEX27 (PEX27) of Saccharomyces cerevisiae (strain ATCC 204508 / S288c) (Baker's yeast).